Reading from the N-terminus, the 510-residue chain is NAD(P)H-quinone oxidoreductase subunit 2 B, chloroplastic (510 aa).

The next 13 membrane-spanning stretches (helical) occupy residues 24–44 (LLLF…GLIL), 57–77 (IPWL…ALLF), 99–119 (IFQF…VEYI), 124–144 (MAIT…MFLC), 149–169 (LITI…LSGY), 183–203 (YLLM…WLYG), 227–247 (PGIS…LSPA), 295–315 (WHLL…LIAI), 323–343 (MLAY…IVGD), 354–374 (YMLF…LFGL), 395–415 (ALSL…AGFF), 418–438 (LYLF…IGLL), and 484–504 (MIVC…IIAI).

It belongs to the complex I subunit 2 family. In terms of assembly, NDH is composed of at least 16 different subunits, 5 of which are encoded in the nucleus.

The protein resides in the plastid. It is found in the chloroplast thylakoid membrane. It carries out the reaction a plastoquinone + NADH + (n+1) H(+)(in) = a plastoquinol + NAD(+) + n H(+)(out). The catalysed reaction is a plastoquinone + NADPH + (n+1) H(+)(in) = a plastoquinol + NADP(+) + n H(+)(out). In terms of biological role, NDH shuttles electrons from NAD(P)H:plastoquinone, via FMN and iron-sulfur (Fe-S) centers, to quinones in the photosynthetic chain and possibly in a chloroplast respiratory chain. The immediate electron acceptor for the enzyme in this species is believed to be plastoquinone. Couples the redox reaction to proton translocation, and thus conserves the redox energy in a proton gradient. The sequence is that of NAD(P)H-quinone oxidoreductase subunit 2 B, chloroplastic from Helianthus annuus (Common sunflower).